The following is a 597-amino-acid chain: Integrator complex subunit 11 (597 aa).

6 residues coordinate Zn(2+): H68, H70, D72, H73, H157, and D178. Residues 68 to 73 carry the HXHXDH motif motif; that stretch reads HFHLDH. E203 is a catalytic residue. H414 is a binding site for Zn(2+). A 1D-myo-inositol hexakisphosphate-binding site is contributed by K462.

It belongs to the metallo-beta-lactamase superfamily. RNA-metabolizing metallo-beta-lactamase-like family. INTS11 subfamily. Belongs to the multiprotein complex Integrator, at least composed of IntS1, IntS2, IntS3, IntS4, omd/IntS5, IntS6, defl/IntS7, IntS8, IntS9, IntS10, IntS11, IntS12, asun/IntS13, IntS14 and IntS15. The core complex associates with protein phosphatase 2A subunits mts/PP2A and Pp2A-29B, to form the Integrator-PP2A (INTAC) complex. IntS11 is part of the RNA endonuclease subcomplex, composed of IntS4, IntS9, IntS11 and inositol hexakisphosphate (InsP6). Interacts with Brat1; interaction is required for the assembly of the RNA endonuclease subcomplex and inhibits the endonuclease activity of IntS11 before formation of mature integrator complex. Zn(2+) is required as a cofactor. As to expression, expressed in neurons and glia of the larval and adult brain.

The protein localises to the nucleus. The protein resides in the cytoplasm. Its subcellular location is the cytosol. With respect to regulation, the RNA endonuclease activity is inhibited by Brat1 that forms hyrogen bond and hydrophobic interactions with the active site. RNA endonuclease component of the integrator complex, a multiprotein complex that terminates RNA polymerase II (Pol II) transcription in the promoter-proximal region of genes. The integrator complex provides a quality checkpoint during transcription elongation by driving premature transcription termination of transcripts that are unfavorably configured for transcriptional elongation: the complex terminates transcription by (1) catalyzing dephosphorylation of the C-terminal domain (CTD) of Pol II subunit Polr2A/Rbp1 and Spt5, and (2) degrading the exiting nascent RNA transcript via endonuclease activity. The integrator complex is also involved in the 3'-end processing of the U7 snRNA, and also the spliceosomal snRNAs U1, U2, U4 and U5. Within the integrator complex, IntS11 constitutes the RNA endonuclease subunit that degrades exiting nascent RNA transcripts. In Drosophila melanogaster (Fruit fly), this protein is Integrator complex subunit 11.